Here is a 317-residue protein sequence, read N- to C-terminus: Mitochondrial thiamine pyrophosphate carrier 1 (317 aa).

Solcar repeat units follow at residues 12-110 (GTRR…TTQV), 120-206 (PPAL…LRPV), and 214-309 (PFGS…SLKL). A run of 6 helical transmembrane segments spans residues 17–35 (VVLSGGIAGLVSRFCVAPL), 91–107 (LMYVCYGALQFTAYRTT), 126–146 (FVSGAVAGGLATASTYPLDLL), 181–198 (GCSAAVGQIVPYMGLFFA), 220–240 (AAAGVIASVLAKTGVFPLDLV), and 284–301 (GLTVSLIKAAPASAITMW).

This sequence belongs to the mitochondrial carrier (TC 2.A.29) family.

It is found in the mitochondrion inner membrane. In terms of biological role, mitochondrial transporter that mediates uptake of thiamine pyrophosphate (ThPP) into mitochondria. This chain is Mitochondrial thiamine pyrophosphate carrier 1 (tpc1), found in Neosartorya fischeri (strain ATCC 1020 / DSM 3700 / CBS 544.65 / FGSC A1164 / JCM 1740 / NRRL 181 / WB 181) (Aspergillus fischerianus).